The following is a 249-amino-acid chain: Large ribosomal subunit protein uL16m (249 aa).

The protein belongs to the universal ribosomal protein uL16 family. Component of the mitochondrial large ribosomal subunit (mt-LSU). Mature N.crassa 74S mitochondrial ribosomes consist of a small (37S) and a large (54S) subunit. The 37S small subunit contains a 16S ribosomal RNA (16S mt-rRNA) and 32 different proteins. The 54S large subunit contains a 23S rRNA (23S mt-rRNA) and 42 different proteins.

The protein localises to the mitochondrion. Its function is as follows. Component of the mitochondrial ribosome (mitoribosome), a dedicated translation machinery responsible for the synthesis of mitochondrial genome-encoded proteins, including at least some of the essential transmembrane subunits of the mitochondrial respiratory chain. The mitoribosomes are attached to the mitochondrial inner membrane and translation products are cotranslationally integrated into the membrane. The chain is Large ribosomal subunit protein uL16m (mrpl16) from Neurospora crassa (strain ATCC 24698 / 74-OR23-1A / CBS 708.71 / DSM 1257 / FGSC 987).